The following is a 429-amino-acid chain: Ribosomal RNA small subunit methyltransferase B (429 aa).

S-adenosyl-L-methionine contacts are provided by residues 254–260, Asp277, Asp303, and Asp322; that span reads CAAPGGK. Cys375 functions as the Nucleophile in the catalytic mechanism.

Belongs to the class I-like SAM-binding methyltransferase superfamily. RsmB/NOP family.

Its subcellular location is the cytoplasm. The catalysed reaction is cytidine(967) in 16S rRNA + S-adenosyl-L-methionine = 5-methylcytidine(967) in 16S rRNA + S-adenosyl-L-homocysteine + H(+). In terms of biological role, specifically methylates the cytosine at position 967 (m5C967) of 16S rRNA. The protein is Ribosomal RNA small subunit methyltransferase B of Yersinia enterocolitica serotype O:8 / biotype 1B (strain NCTC 13174 / 8081).